The chain runs to 284 residues: Co-chaperone protein DjlA (284 aa).

The Periplasmic segment spans residues Met-1–Lys-6. Residues Ile-7–His-30 traverse the membrane as a helical segment. At Gln-31–Lys-284 the chain is on the cytoplasmic side. The J domain occupies Asp-218–Lys-284.

Homodimer.

The protein resides in the cell inner membrane. Regulatory DnaK co-chaperone. Direct interaction between DnaK and DjlA is needed for the induction of the wcaABCDE operon, involved in the synthesis of a colanic acid polysaccharide capsule, possibly through activation of the RcsB/RcsC phosphotransfer signaling pathway. The colanic acid capsule may help the bacterium survive conditions outside the host. This Vibrio parahaemolyticus serotype O3:K6 (strain RIMD 2210633) protein is Co-chaperone protein DjlA.